The primary structure comprises 383 residues: Cytochrome b (383 aa).

4 helical membrane passes run 31-51 (FGSL…FLAM), 75-97 (WLMR…VHIF), 112-132 (LWCS…MGYV), and 178-198 (FFSL…IHLI). His-81 and His-95 together coordinate heme b. 2 residues coordinate heme b: His-182 and His-196. His-201 contributes to the a ubiquinone binding site. The next 4 membrane-spanning stretches (helical) occupy residues 224–244 (FYTK…IFIF), 288–308 (IGGV…PFTN), 320–340 (IFKV…WVGQ), and 347–367 (YTEI…IIIP).

This sequence belongs to the cytochrome b family. Fungal cytochrome b-c1 complex contains 10 subunits; 3 respiratory subunits, 2 core proteins and 5 low-molecular weight proteins. Cytochrome b-c1 complex is a homodimer. Heme b serves as cofactor.

Its subcellular location is the mitochondrion inner membrane. Component of the ubiquinol-cytochrome c reductase complex (complex III or cytochrome b-c1 complex) that is part of the mitochondrial respiratory chain. The b-c1 complex mediates electron transfer from ubiquinol to cytochrome c. Contributes to the generation of a proton gradient across the mitochondrial membrane that is then used for ATP synthesis. In Phytophthora megasperma (Potato pink rot fungus), this protein is Cytochrome b (cob).